The following is a 96-amino-acid chain: Large ribosomal subunit protein eL14 (96 aa).

The protein belongs to the eukaryotic ribosomal protein eL14 family.

This is Large ribosomal subunit protein eL14 from Sulfurisphaera tokodaii (strain DSM 16993 / JCM 10545 / NBRC 100140 / 7) (Sulfolobus tokodaii).